The following is a 676-amino-acid chain: Pescadillo homolog (676 aa).

The segment at 277–296 (TIEGSNKQSNNSSNQEVSRD) is disordered. Residues 281 to 291 (SNKQSNNSSNQ) show a composition bias toward low complexity. A BRCT domain is found at 351 to 467 (EAGALFAPFT…KLLRPDLYAP (117 aa)). The interval 471–676 (LPPHLSPWVK…RRKLEKTGEK (206 aa)) is disordered. Over residues 494 to 519 (EQEEEGEAEMAGEEEEEESDEEMEEA) the composition is skewed to acidic residues. The span at 520–531 (PETKKADAKADE) shows a compositional bias: basic and acidic residues. Acidic residues-rich tracts occupy residues 532-541 (SESEDEDESV) and 548-581 (ADSD…DEEE). The stretch at 571–676 (EAASESEDEE…RRKLEKTGEK (106 aa)) forms a coiled coil. Positions 582–592 (AARTQHQKELE) are enriched in basic and acidic residues. Basic residues predominate over residues 611–624 (KKKSSQAKKIAAKK). A compositionally biased stretch (basic and acidic residues) spans 625 to 635 (RKEEEELERQK).

This sequence belongs to the pescadillo family. Component of the NOP7 complex, composed of erb1, nop7 and ytm1. The complex is held together by erb1, which interacts with nop7 via its N-terminal domain and with ytm1 via a high-affinity interaction between the seven-bladed beta-propeller domains of the 2 proteins. The NOP7 complex associates with the 66S pre-ribosome.

It is found in the nucleus. The protein resides in the nucleolus. The protein localises to the nucleoplasm. In terms of biological role, component of the NOP7 complex, which is required for maturation of the 25S and 5.8S ribosomal RNAs and formation of the 60S ribosome. This chain is Pescadillo homolog (nop7), found in Aspergillus terreus (strain NIH 2624 / FGSC A1156).